We begin with the raw amino-acid sequence, 416 residues long: Subtilisin-like protease 12 (416 aa).

The signal sequence occupies residues 1-19 (MSILKMMLIYFAIFWVVNA). A propeptide spanning residues 20–116 (AQLLDIDSQG…VEPNKEMQVA (97 aa)) is cleaved from the precursor. The region spanning 35–115 (YIVVMKDRVS…FVEPNKEMQV (81 aa)) is the Inhibitor I9 domain. N-linked (GlcNAc...) asparagine glycans are attached at residues Asn-123, Asn-136, and Asn-150. Residues 125–416 (TWGLSRISHK…NKLLYNGSGA (292 aa)) enclose the Peptidase S8 domain. Active-site charge relay system residues include Asp-157 and His-188. N-linked (GlcNAc...) asparagine glycans are attached at residues Asn-249, Asn-305, Asn-334, and Asn-353. The active-site Charge relay system is the Ser-362. Asn-404 and Asn-412 each carry an N-linked (GlcNAc...) asparagine glycan.

The protein belongs to the peptidase S8 family.

The protein localises to the secreted. In terms of biological role, secreted subtilisin-like serine protease with keratinolytic activity that contributes to pathogenicity. The polypeptide is Subtilisin-like protease 12 (SUB12) (Arthroderma benhamiae (strain ATCC MYA-4681 / CBS 112371) (Trichophyton mentagrophytes)).